Here is a 361-residue protein sequence, read N- to C-terminus: Probable purine permease 5 (361 aa).

Transmembrane regions (helical) follow at residues W37–L57, W70–T90, L105–Y125, T134–V154, L158–L178, Y193–L213, V235–F255, L285–L305, and V315–L335. The EamA domain maps to V75–L178.

It belongs to the purine permeases (TC 2.A.7.14) family.

The protein localises to the membrane. This is Probable purine permease 5 (PUP5) from Arabidopsis thaliana (Mouse-ear cress).